A 3218-amino-acid chain; its full sequence is Serine/threonine-protein kinase Smg1 (3218 aa).

Residues 32 to 78 form a disordered region; sequence LNNNGNHGDSSNEGGGGNGSGRGGATGSGNIAGLGGSESMWSPGGGK. Positions 33–43 are enriched in low complexity; the sequence is NNNGNHGDSSN. A compositionally biased stretch (gly residues) spans 44-67; it reads EGGGGNGSGRGGATGSGNIAGLGG. A Phosphoserine modification is found at Ser70. An FAT domain is found at 1289 to 1692; the sequence is DAAAAAREEG…IFPAVVGANR (404 aa). The stretch at 1643–1678 is one HEAT repeat; the sequence is APWKVIIPQLFSRLNHHEPYVRKSVCDLLCRLAKSR. Residues 1897–2232 enclose the PI3K/PI4K catalytic domain; that stretch reads VESSVCVLPT…LGVGDLKYHK (336 aa). The interval 1903-1909 is G-loop; it reads VLPTKTK. The interval 2101–2109 is catalytic loop; sequence GLGDRHLDN. The interval 2121–2145 is activation loop; it reads HIDYNVCFEKGRTLRIPEKVPFRLT. An FATC domain is found at 3186–3218; that stretch reads QRSTVAEQVDYVIREACNPENLAVLYEGWTPWV.

It belongs to the PI3/PI4-kinase family. In terms of assembly, component of a post-splicing multiprotein NMD complex. The cofactor is Mn(2+).

It localises to the cytoplasm. The enzyme catalyses L-seryl-[protein] + ATP = O-phospho-L-seryl-[protein] + ADP + H(+). It carries out the reaction L-threonyl-[protein] + ATP = O-phospho-L-threonyl-[protein] + ADP + H(+). Serine/threonine protein kinase involved in mRNA surveillance. Recognizes the substrate consensus sequence [ST]-Q. Involved in nonsense-mediated decay (NMD) of mRNAs containing premature stop codons, probably by phosphorylating Upf1. The sequence is that of Serine/threonine-protein kinase Smg1 (nonC) from Drosophila melanogaster (Fruit fly).